The sequence spans 357 residues: Cholinesterase 1 (357 aa).

Serine 112 (acyl-ester intermediate) is an active-site residue. Cysteine 166 and cysteine 179 form a disulfide bridge. Catalysis depends on charge relay system residues glutamate 244 and histidine 357.

The protein belongs to the type-B carboxylesterase/lipase family.

It carries out the reaction an acylcholine + H2O = a carboxylate + choline + H(+). The polypeptide is Cholinesterase 1 (CHE1) (Branchiostoma lanceolatum (Common lancelet)).